The primary structure comprises 317 residues: Insulin-like growth factor-binding protein 2 (317 aa).

The N-terminal stretch at 1 to 33 (MQPRLGGPALLLLPPLLLLLLLGAGGGDCGARA) is a signal peptide. The IGFBP N-terminal domain occupies 35–126 (VLFRCPPCTP…VHGEGTCEKH (92 aa)). Intrachain disulfides connect C39–C76, C42–C78, C50–C79, C68–C82, C90–C103, and C97–C123. Disordered stretches follow at residues 125–151 (KHGDAEYSASPEQVADNGEEHSEGGQV) and 189–218 (EQHRQMGKGGKHHLGLEEPKKLRPPPARTP). A Thyroglobulin type-1 domain is found at 216–298 (RTPCQQELDQ…APTIRGDPEC (83 aa)). Intrachain disulfides connect C219/C253, C264/C275, and C277/C298. Residues 293–295 (RGD) carry the Cell attachment site motif.

In terms of assembly, interacts with IGF1. Interacts with IGF2. Interacts (via RGD motif) with integrin alpha5/ITGA5; this interaction induces cell migration, adhesion or apoptosis according to the context. Interacts with PTPRB; this interaction leads to PTPRB dimerization and inactivation. Cleaved by MMP9 leading to release of free IGF2 from IGFBP2-IGF2 complex, which contributes to enhance the motility and the growth of astrocytes. In terms of processing, O-glycosylated. In terms of tissue distribution, expressed in abundance in selected adult tissues, namely liver, kidney, adrenal, pituitary and choroid plexus.

The protein localises to the secreted. Its function is as follows. Multifunctional protein that plays a critical role in regulating the availability of IGFs such as IGF1 and IGF2 to their receptors and thereby regulates IGF-mediated cellular processes including proliferation, differentiation, and apoptosis in a cell-type specific manner. Functions coordinately with receptor protein tyrosine phosphatase beta/PTPRB and the IGF1 receptor to regulate IGF1-mediated signaling by stimulating the phosphorylation of PTEN leading to its inactivation and AKT1 activation. Plays a positive role in cell migration via interaction with integrin alpha5/ITGA5 through an RGD motif. Additionally, interaction with ITGA5/ITGB1 enhances the adhesion of endothelial progenitor cells to endothelial cells. Upon mitochondrial damage, facilitates apoptosis with ITGA5 of podocytes, and then activates the phosphorylation of focal adhesion kinase (FAK)-mediated mitochondrial injury. The sequence is that of Insulin-like growth factor-binding protein 2 (IGFBP2) from Ovis aries (Sheep).